The primary structure comprises 368 residues: Ferrochelatase (368 aa).

Fe cation contacts are provided by histidine 209 and glutamate 290. The interval 341–368 is disordered; it reads ADLGGGREATGQAAERSRQRALALGAKQ.

Belongs to the ferrochelatase family.

The protein resides in the cytoplasm. The enzyme catalyses heme b + 2 H(+) = protoporphyrin IX + Fe(2+). Its pathway is porphyrin-containing compound metabolism; protoheme biosynthesis; protoheme from protoporphyrin-IX: step 1/1. In terms of biological role, catalyzes the ferrous insertion into protoporphyrin IX. The sequence is that of Ferrochelatase from Nitrosococcus oceani (strain ATCC 19707 / BCRC 17464 / JCM 30415 / NCIMB 11848 / C-107).